The chain runs to 193 residues: Ribonuclease HII (193 aa).

The region spanning 15–193 (YIVAGIDEAG…PYHRKSFKCC (179 aa)) is the RNase H type-2 domain. Aspartate 21, glutamate 22, and aspartate 112 together coordinate a divalent metal cation.

The protein belongs to the RNase HII family. It depends on Mn(2+) as a cofactor. Mg(2+) serves as cofactor.

It is found in the cytoplasm. The enzyme catalyses Endonucleolytic cleavage to 5'-phosphomonoester.. In terms of biological role, endonuclease that specifically degrades the RNA of RNA-DNA hybrids. The polypeptide is Ribonuclease HII (Rickettsia akari (strain Hartford)).